Consider the following 153-residue polypeptide: Putative transmembrane protein INAFM2 (153 aa).

Basic and acidic residues predominate over residues 1-23 (MKERDAAPAERGKPATYTGDKKA). Residues 1-24 (MKERDAAPAERGKPATYTGDKKAK) are disordered. The chain crosses the membrane as a helical span at residues 36-56 (LATVFAYVLSVSLAAIVLAVY). The interval 66–153 (AGTSGGAAGP…EETAAAPGSR (88 aa)) is disordered. A compositionally biased stretch (low complexity) spans 79 to 101 (GSNATGPSGTSGAAAAGPNTTGS). The span at 118–131 (PAPPEPPADSPPAG) shows a compositional bias: pro residues.

It is found in the membrane. This chain is Putative transmembrane protein INAFM2, found in Homo sapiens (Human).